Reading from the N-terminus, the 334-residue chain is Glycerol-3-phosphate dehydrogenase [NAD(P)+] (334 aa).

NADPH is bound by residues tryptophan 13, arginine 33, and lysine 106. Sn-glycerol 3-phosphate-binding residues include lysine 106, glycine 137, and serine 139. Alanine 141 lines the NADPH pocket. The sn-glycerol 3-phosphate site is built by lysine 192, aspartate 245, serine 255, arginine 256, and asparagine 257. Lysine 192 functions as the Proton acceptor in the catalytic mechanism. NADPH is bound at residue arginine 256. NADPH is bound by residues valine 280 and glutamate 282.

The protein belongs to the NAD-dependent glycerol-3-phosphate dehydrogenase family.

The protein resides in the cytoplasm. It carries out the reaction sn-glycerol 3-phosphate + NAD(+) = dihydroxyacetone phosphate + NADH + H(+). The enzyme catalyses sn-glycerol 3-phosphate + NADP(+) = dihydroxyacetone phosphate + NADPH + H(+). It participates in membrane lipid metabolism; glycerophospholipid metabolism. Catalyzes the reduction of the glycolytic intermediate dihydroxyacetone phosphate (DHAP) to sn-glycerol 3-phosphate (G3P), the key precursor for phospholipid synthesis. The sequence is that of Glycerol-3-phosphate dehydrogenase [NAD(P)+] from Chlamydia trachomatis serovar L2 (strain ATCC VR-902B / DSM 19102 / 434/Bu).